Reading from the N-terminus, the 200-residue chain is Regulator of free ubiquitin chains 1 (200 aa).

This sequence belongs to the RFU1 family. Interacts with BRO1 and DOA4.

It is found in the endosome. In terms of biological role, inhibitor of the DOA4 deubiquitinase involved in the regulation of protein degradation by the proteasome and maintenance of a normal level of free ubiquitin. In Saccharomyces cerevisiae (strain RM11-1a) (Baker's yeast), this protein is Regulator of free ubiquitin chains 1 (RFU1).